The primary structure comprises 142 residues: Transcriptional regulator MraZ (142 aa).

2 SpoVT-AbrB domains span residues 5–47 and 76–119; these read EYPY…PLAS and ANKA…NPER.

This sequence belongs to the MraZ family. In terms of assembly, forms oligomers.

It is found in the cytoplasm. The protein resides in the nucleoid. This Deinococcus geothermalis (strain DSM 11300 / CIP 105573 / AG-3a) protein is Transcriptional regulator MraZ.